The chain runs to 243 residues: 1-(5-phosphoribosyl)-5-[(5-phosphoribosylamino)methylideneamino] imidazole-4-carboxamide isomerase (243 aa).

D10 acts as the Proton acceptor in catalysis. The active-site Proton donor is the D131.

It belongs to the HisA/HisF family.

It localises to the cytoplasm. The catalysed reaction is 1-(5-phospho-beta-D-ribosyl)-5-[(5-phospho-beta-D-ribosylamino)methylideneamino]imidazole-4-carboxamide = 5-[(5-phospho-1-deoxy-D-ribulos-1-ylimino)methylamino]-1-(5-phospho-beta-D-ribosyl)imidazole-4-carboxamide. The protein operates within amino-acid biosynthesis; L-histidine biosynthesis; L-histidine from 5-phospho-alpha-D-ribose 1-diphosphate: step 4/9. The sequence is that of 1-(5-phosphoribosyl)-5-[(5-phosphoribosylamino)methylideneamino] imidazole-4-carboxamide isomerase from Rhizorhabdus wittichii (strain DSM 6014 / CCUG 31198 / JCM 15750 / NBRC 105917 / EY 4224 / RW1) (Sphingomonas wittichii).